The sequence spans 145 residues: Basic phospholipase A2 PC17 (145 aa).

An N-terminal signal peptide occupies residues 1 to 21 (MYPAHLLVLLAVCVSLLGASA). Positions 22–27 (ISNQPR) are excised as a propeptide. 7 disulfides stabilise this stretch: Cys38/Cys98, Cys54/Cys144, Cys56/Cys72, Cys71/Cys125, Cys78/Cys118, Cys87/Cys111, and Cys105/Cys116. The Ca(2+) site is built by Tyr55, Gly57, and Gly59. Residue His75 is part of the active site. Ca(2+) is bound at residue Asp76. Asp119 is an active-site residue.

It belongs to the phospholipase A2 family. Group I subfamily. D49 sub-subfamily. It depends on Ca(2+) as a cofactor. Expressed by the venom gland.

The protein resides in the secreted. The catalysed reaction is a 1,2-diacyl-sn-glycero-3-phosphocholine + H2O = a 1-acyl-sn-glycero-3-phosphocholine + a fatty acid + H(+). Snake venom phospholipase A2 (PLA2) that inhibits neuromuscular transmission by blocking acetylcholine release from the nerve termini. PLA2 catalyzes the calcium-dependent hydrolysis of the 2-acyl groups in 3-sn-phosphoglycerides. The chain is Basic phospholipase A2 PC17 from Laticauda colubrina (Yellow-lipped sea krait).